The primary structure comprises 65 residues: Large ribosomal subunit protein uL29 (65 aa).

Belongs to the universal ribosomal protein uL29 family.

The sequence is that of Large ribosomal subunit protein uL29 from Buchnera aphidicola subsp. Cinara cedri (strain Cc).